Here is a 342-residue protein sequence, read N- to C-terminus: Outer membrane porin C (342 aa).

It belongs to the Gram-negative porin family. Homotrimer.

It localises to the cell outer membrane. Forms pores that allow passive diffusion of small molecules across the outer membrane. In R.aquatilis OmpC is involved in the adhesion to wheat roots. The polypeptide is Outer membrane porin C (ompC) (Rahnella aquatilis).